The sequence spans 41 residues: Large ribosomal subunit protein bL36 (41 aa).

The protein belongs to the bacterial ribosomal protein bL36 family.

This chain is Large ribosomal subunit protein bL36, found in Rhodopseudomonas palustris (strain TIE-1).